Consider the following 89-residue polypeptide: Neurotoxin beta-KTx 52.1 (89 aa).

The first 20 residues, 1–20 (MKQYIFFLALIVLTATFAEA), serve as a signal peptide directing secretion. A propeptide spanning residues 21–39 (GKKTEILDKVKKVFSKAKD) is cleaved from the precursor. The 37-residue stretch at 53–89 (ELGCPFIDKWCEDHCDSKKLVGKCENFDCSCVKLGGK) folds into the BetaSPN-type CS-alpha/beta domain. 3 disulfides stabilise this stretch: Cys56/Cys76, Cys63/Cys81, and Cys67/Cys83.

It belongs to the long chain scorpion toxin family. Class 2 subfamily. Expressed by the venom gland.

The protein localises to the secreted. Its function is as follows. Inhibits voltage-gated potassium channel. The sequence is that of Neurotoxin beta-KTx 52.1 from Lychas mucronatus (Chinese swimming scorpion).